Consider the following 151-residue polypeptide: S-protein homolog 1 (151 aa).

Residues 1-18 form the signal peptide; the sequence is MNCIKQFLLAICFSLALT.

Belongs to the plant self-incompatibility (S1) protein family. As to expression, restricted to floral tissues.

It localises to the secreted. This Arabidopsis thaliana (Mouse-ear cress) protein is S-protein homolog 1.